The chain runs to 430 residues: Aspartate aminotransferase, mitochondrial (430 aa).

The N-terminal 29 residues, 1-29, are a transit peptide targeting the mitochondrion; that stretch reads MALLHSGRVLSGIAAAFHPGLAAAASARA. Phosphothreonine is present on T48. K59 is modified (N6-acetyllysine). G65 contacts substrate. An N6-acetyllysine; alternate modification is found at K73. K73 bears the N6-succinyllysine; alternate mark. Position 82 is an N6-acetyllysine (K82). K90 bears the N6-acetyllysine; alternate mark. An N6-succinyllysine; alternate modification is found at K90. Y96 carries the 3'-nitrotyrosine; alternate modification. The residue at position 96 (Y96) is a Phosphotyrosine; alternate. An N6-acetyllysine; alternate mark is found at K107 and K122. 2 positions are modified to N6-succinyllysine; alternate: K107 and K122. S143 bears the Phosphoserine mark. K159 carries the post-translational modification N6-acetyllysine; alternate. An N6-succinyllysine; alternate modification is found at K159. W162 contributes to the substrate binding site. K185 is subject to N6-acetyllysine; alternate. K185 carries the N6-succinyllysine; alternate modification. N215 provides a ligand contact to substrate. N6-succinyllysine is present on K227. Position 234 is an N6-acetyllysine (K234). An N6-acetyllysine; alternate mark is found at K279 and K296. K279 bears the N6-(pyridoxal phosphate)lysine; alternate mark. An N6-succinyllysine; alternate modification is found at K296. At K302 the chain carries N6-acetyllysine. K309 bears the N6-acetyllysine; alternate mark. An N6-succinyllysine; alternate modification is found at K309. R313 is subject to Asymmetric dimethylarginine. T333 bears the Phosphothreonine mark. The residue at position 338 (K338) is an N6-acetyllysine; alternate. The residue at position 338 (K338) is an N6-succinyllysine; alternate. At K345 the chain carries N6-acetyllysine. At K363 the chain carries N6-acetyllysine; alternate. K363 is subject to N6-succinyllysine; alternate. K364 and K387 each carry N6-acetyllysine. 2 positions are modified to N6-acetyllysine; alternate: K396 and K404. Residues K396 and K404 each carry the N6-succinyllysine; alternate modification. Residue R407 coordinates substrate.

This sequence belongs to the class-I pyridoxal-phosphate-dependent aminotransferase family. As to quaternary structure, homodimer. The cofactor is pyridoxal 5'-phosphate.

It is found in the mitochondrion matrix. The protein resides in the cell membrane. It carries out the reaction L-aspartate + 2-oxoglutarate = oxaloacetate + L-glutamate. The catalysed reaction is L-kynurenine + 2-oxoglutarate = kynurenate + L-glutamate + H2O. Functionally, catalyzes the irreversible transamination of the L-tryptophan metabolite L-kynurenine to form kynurenic acid (KA). As a member of the malate-aspartate shuttle, it has a key role in the intracellular NAD(H) redox balance. Is important for metabolite exchange between mitochondria and cytosol, and for amino acid metabolism. Facilitates cellular uptake of long-chain free fatty acids. In Macaca fascicularis (Crab-eating macaque), this protein is Aspartate aminotransferase, mitochondrial (GOT2).